The following is a 297-amino-acid chain: Homoserine kinase (297 aa).

82–92 contacts ATP; sequence PLTRGLGSSAS.

The protein belongs to the GHMP kinase family. Homoserine kinase subfamily.

It localises to the cytoplasm. The catalysed reaction is L-homoserine + ATP = O-phospho-L-homoserine + ADP + H(+). It participates in amino-acid biosynthesis; L-threonine biosynthesis; L-threonine from L-aspartate: step 4/5. Its function is as follows. Catalyzes the ATP-dependent phosphorylation of L-homoserine to L-homoserine phosphate. In Bacillus cereus (strain B4264), this protein is Homoserine kinase.